A 127-amino-acid chain; its full sequence is MEDADVYAISVEVAPRFLDDQSAPEDGRYAFAYTIRIHNQGRVAARLVARHWRITDANGRVEHVDGDGVIGEQPRLRPGEDFHYTSGVMLGTDHGTMQGHYDMVADDGTEFAAPVAPFVLAIPRTLH.

The 125-residue stretch at 3 to 127 (DADVYAISVE…FVLAIPRTLH (125 aa)) folds into the ApaG domain.

The protein is Protein ApaG of Stenotrophomonas maltophilia (strain K279a).